The following is a 1433-amino-acid chain: Probable serine/threonine-protein kinase DDB_G0277989 (1433 aa).

Residues 1 to 4 (MNEI) and Lys41 each bind ATP. Residues 1-272 (MNEIIVGEYK…EFDDFTHPLS (272 aa)) form the Protein kinase 1 domain. Asp151 acts as the Proton acceptor in catalysis. 2 stretches are compositionally biased toward low complexity: residues 332–362 (NNNN…NNNN) and 533–550 (TATT…TTTA). 2 disordered regions span residues 332–366 (NNNN…SDGP) and 521–550 (PSSE…TTTA). The 257-residue stretch at 1177–1433 (IYDKRYYIQK…QPHVCKSFKK (257 aa)) folds into the Protein kinase 2 domain.

It belongs to the protein kinase superfamily. Ser/Thr protein kinase family.

The enzyme catalyses L-seryl-[protein] + ATP = O-phospho-L-seryl-[protein] + ADP + H(+). The catalysed reaction is L-threonyl-[protein] + ATP = O-phospho-L-threonyl-[protein] + ADP + H(+). The chain is Probable serine/threonine-protein kinase DDB_G0277989 from Dictyostelium discoideum (Social amoeba).